The chain runs to 63 residues: Insect toxin TbIT-1 (63 aa).

One can recognise an LCN-type CS-alpha/beta domain in the interval 2-63; sequence KEGYPVDSRG…VYDNASNKCB (62 aa). Disulfide bonds link Cys-12-Cys-62, Cys-16-Cys-38, Cys-24-Cys-43, and Cys-28-Cys-45.

It belongs to the long (4 C-C) scorpion toxin superfamily. Sodium channel inhibitor family. Beta subfamily. Expressed by the venom gland.

The protein localises to the secreted. Its function is as follows. Beta toxins bind voltage-independently at site-4 of sodium channels (Nav) and shift the voltage of activation toward more negative potentials thereby affecting sodium channel activation and promoting spontaneous and repetitive firing. This toxin is only active against insects. The chain is Insect toxin TbIT-1 from Tityus bahiensis (Brazilian scorpion).